We begin with the raw amino-acid sequence, 263 residues long: MKPKILLTNDDGITSTGLWAAYDALAPIADVTVVAPATQQSAVGRSISIFEPIRANQVTMNGVTAYSVGGKPTDAVIIGLFALRLNPDLVVSGVNIGENLSFESIMTSGTVGAALEAANQGVPSLAFSLQVEDQGDKFDDPSRIIDRYSDAKRVVRETCERVLANGFPGKAHVINVNIPARVRGGYEITRLAEKLFYTGVEERLDPRGRPYYWIDGPLYEDAEEGTDVHAVQRGNVSITPITLDCTAYAAADELKAIFDGMHI.

D10, D11, S41, and N95 together coordinate a divalent metal cation.

Belongs to the SurE nucleotidase family. It depends on a divalent metal cation as a cofactor.

It is found in the cytoplasm. The catalysed reaction is a ribonucleoside 5'-phosphate + H2O = a ribonucleoside + phosphate. In terms of biological role, nucleotidase that shows phosphatase activity on nucleoside 5'-monophosphates. The chain is 5'-nucleotidase SurE from Methanoculleus marisnigri (strain ATCC 35101 / DSM 1498 / JR1).